The sequence spans 287 residues: 4-diphosphocytidyl-2-C-methyl-D-erythritol kinase (287 aa).

Lys12 is an active-site residue. ATP is bound at residue Pro94–Ser104. Asp136 is an active-site residue.

Belongs to the GHMP kinase family. IspE subfamily.

It catalyses the reaction 4-CDP-2-C-methyl-D-erythritol + ATP = 4-CDP-2-C-methyl-D-erythritol 2-phosphate + ADP + H(+). The protein operates within isoprenoid biosynthesis; isopentenyl diphosphate biosynthesis via DXP pathway; isopentenyl diphosphate from 1-deoxy-D-xylulose 5-phosphate: step 3/6. Catalyzes the phosphorylation of the position 2 hydroxy group of 4-diphosphocytidyl-2C-methyl-D-erythritol. The polypeptide is 4-diphosphocytidyl-2-C-methyl-D-erythritol kinase (Albidiferax ferrireducens (strain ATCC BAA-621 / DSM 15236 / T118) (Rhodoferax ferrireducens)).